Consider the following 303-residue polypeptide: Cyclin-dependent kinase B1-1 (303 aa).

One can recognise a Protein kinase domain in the interval 4–295 (YEKLEKVGEG…AKAAMEHPYF (292 aa)). ATP contacts are provided by residues 10–18 (VGEGTYGKV) and lysine 33. Residue threonine 14 is modified to Phosphothreonine. Position 15 is a phosphotyrosine (tyrosine 15). The Proton acceptor role is filled by aspartate 136. At threonine 170 the chain carries Phosphothreonine.

This sequence belongs to the protein kinase superfamily. CMGC Ser/Thr protein kinase family. CDC2/CDKX subfamily. Expressed in actively dividing cells: root and shoot apical meristems, and young leaves.

The enzyme catalyses L-seryl-[protein] + ATP = O-phospho-L-seryl-[protein] + ADP + H(+). It carries out the reaction L-threonyl-[protein] + ATP = O-phospho-L-threonyl-[protein] + ADP + H(+). The catalysed reaction is [DNA-directed RNA polymerase] + ATP = phospho-[DNA-directed RNA polymerase] + ADP + H(+). This Oryza sativa subsp. japonica (Rice) protein is Cyclin-dependent kinase B1-1 (CDKB1-1).